We begin with the raw amino-acid sequence, 494 residues long: Catalase (494 aa).

Active-site residues include histidine 65 and asparagine 138. Tyrosine 348 provides a ligand contact to heme.

Belongs to the catalase family. In terms of assembly, homotetramer. It depends on heme as a cofactor.

It localises to the cytoplasm. Its subcellular location is the cytosol. The protein localises to the peroxisome matrix. It catalyses the reaction 2 H2O2 = O2 + 2 H2O. Functionally, catalyzes the degradation of hydrogen peroxide (H(2)O(2)) generated by peroxisomal oxidases to water and oxygen, thereby protecting cells from the toxic effects of hydrogen peroxide. The protein is Catalase of Pisum sativum (Garden pea).